The chain runs to 952 residues: Leucine--tRNA ligase (952 aa).

The 'HIGH' region signature appears at 48 to 58 (PYLNGVLHAGH). Residues 644-648 (KLSKS) carry the 'KMSKS' region motif. An ATP-binding site is contributed by Lys647.

The protein belongs to the class-I aminoacyl-tRNA synthetase family.

It localises to the cytoplasm. It catalyses the reaction tRNA(Leu) + L-leucine + ATP = L-leucyl-tRNA(Leu) + AMP + diphosphate. This Methanococcus vannielii (strain ATCC 35089 / DSM 1224 / JCM 13029 / OCM 148 / SB) protein is Leucine--tRNA ligase.